The sequence spans 686 residues: Kinesin light chain (686 aa).

Disordered regions lie at residues 1–23 and 158–204; these read MSGS…SQEQ and KYDE…SVSA. Residues 20–160 adopt a coiled-coil conformation; sequence SQEQIITGTR…EYMNSIKKYD (141 aa). TPR repeat units lie at residues 215 to 248, 257 to 290, 299 to 332, 341 to 374, 383 to 416, and 472 to 505; these read LRTL…LEKT, ATML…REKT, AATL…REKV, AKQL…YEKK, AKTK…AHER, and TTTL…RRNA. 2 disordered regions span residues 520–558 and 586–686; these read QDLS…YEKT and GYVE…SGNF. Positions 675–686 are enriched in polar residues; it reads DNLSSRRQSGNF.

It belongs to the kinesin light chain family. As to quaternary structure, oligomeric complex composed of two heavy chains and two light chains. Post-translationally, phosphorylation may modulate the process of mechanochemical coupling.

The protein localises to the cytoplasm. It is found in the cytoskeleton. In terms of biological role, kinesin is a microtubule-associated force-producing protein that may play a role in organelle transport. The light chain may function in coupling of cargo to the heavy chain or in the modulation of its ATPase activity. This Strongylocentrotus purpuratus (Purple sea urchin) protein is Kinesin light chain.